A 283-amino-acid chain; its full sequence is Pantothenate synthetase 2 (283 aa).

34 to 41 (MGALHDGH) is a binding site for ATP. His41 (proton donor) is an active-site residue. A (R)-pantoate-binding site is contributed by Gln65. Gln65 serves as a coordination point for beta-alanine. 152-155 (GEKD) provides a ligand contact to ATP. Gln158 contributes to the (R)-pantoate binding site. Residues Val181 and 189 to 192 (MSSR) contribute to the ATP site.

It belongs to the pantothenate synthetase family. In terms of assembly, homodimer.

The protein resides in the cytoplasm. The enzyme catalyses (R)-pantoate + beta-alanine + ATP = (R)-pantothenate + AMP + diphosphate + H(+). The protein operates within cofactor biosynthesis; (R)-pantothenate biosynthesis; (R)-pantothenate from (R)-pantoate and beta-alanine: step 1/1. In terms of biological role, catalyzes the condensation of pantoate with beta-alanine in an ATP-dependent reaction via a pantoyl-adenylate intermediate. This Bradyrhizobium diazoefficiens (strain JCM 10833 / BCRC 13528 / IAM 13628 / NBRC 14792 / USDA 110) protein is Pantothenate synthetase 2.